Reading from the N-terminus, the 506-residue chain is Photosystem II CP47 reaction center protein (506 aa).

The next 6 membrane-spanning stretches (helical) occupy residues 21–36 (SVHI…WAGS), 101–115 (ILFS…IWHW), 140–156 (GIHL…FGAF), 203–218 (IAAG…FHLS), 237–252 (VLSS…AFVV), and 457–472 (SFAL…HGAR).

The protein belongs to the PsbB/PsbC family. PsbB subfamily. PSII is composed of 1 copy each of membrane proteins PsbA, PsbB, PsbC, PsbD, PsbE, PsbF, PsbH, PsbI, PsbJ, PsbK, PsbL, PsbM, PsbT, PsbX, PsbY, PsbZ, Psb30/Ycf12, at least 3 peripheral proteins of the oxygen-evolving complex and a large number of cofactors. It forms dimeric complexes. It depends on Binds multiple chlorophylls. PSII binds additional chlorophylls, carotenoids and specific lipids. as a cofactor.

It is found in the plastid. Its subcellular location is the chloroplast thylakoid membrane. In terms of biological role, one of the components of the core complex of photosystem II (PSII). It binds chlorophyll and helps catalyze the primary light-induced photochemical processes of PSII. PSII is a light-driven water:plastoquinone oxidoreductase, using light energy to abstract electrons from H(2)O, generating O(2) and a proton gradient subsequently used for ATP formation. The sequence is that of Photosystem II CP47 reaction center protein from Cucumis sativus (Cucumber).